Reading from the N-terminus, the 493-residue chain is Betaine aldehyde dehydrogenase (493 aa).

Positions 32, 33, and 99 each coordinate K(+). Residue 156-158 coordinates NAD(+); that stretch reads GAW. The active-site Charge relay system is the Lys168. NAD(+) contacts are provided by residues 182 to 185 and 235 to 238; these read KPSE and SVPT. A K(+)-binding site is contributed by Leu250. Catalysis depends on Glu256, which acts as the Proton acceptor. 3 residues coordinate NAD(+): Gly258, Cys290, and Glu390. The active-site Nucleophile is the Cys290. Cys290 carries the cysteine sulfenic acid (-SOH) modification. Positions 460 and 463 each coordinate K(+). The Charge relay system role is filled by Glu467.

This sequence belongs to the aldehyde dehydrogenase family. In terms of assembly, dimer of dimers. K(+) is required as a cofactor.

The enzyme catalyses betaine aldehyde + NAD(+) + H2O = glycine betaine + NADH + 2 H(+). The protein operates within amine and polyamine biosynthesis; betaine biosynthesis via choline pathway; betaine from betaine aldehyde: step 1/1. Its function is as follows. Involved in the biosynthesis of the osmoprotectant glycine betaine. Catalyzes the irreversible oxidation of betaine aldehyde to the corresponding acid. The polypeptide is Betaine aldehyde dehydrogenase (Agrobacterium fabrum (strain C58 / ATCC 33970) (Agrobacterium tumefaciens (strain C58))).